We begin with the raw amino-acid sequence, 355 residues long: UDP-N-acetylglucosamine--N-acetylmuramyl-(pentapeptide) pyrophosphoryl-undecaprenol N-acetylglucosamine transferase (355 aa).

UDP-N-acetyl-alpha-D-glucosamine contacts are provided by residues 13–15, Asn125, Arg162, Ser190, Ile244, and Gln289; that span reads TGG.

Belongs to the glycosyltransferase 28 family. MurG subfamily.

The protein localises to the cell inner membrane. The catalysed reaction is di-trans,octa-cis-undecaprenyl diphospho-N-acetyl-alpha-D-muramoyl-L-alanyl-D-glutamyl-meso-2,6-diaminopimeloyl-D-alanyl-D-alanine + UDP-N-acetyl-alpha-D-glucosamine = di-trans,octa-cis-undecaprenyl diphospho-[N-acetyl-alpha-D-glucosaminyl-(1-&gt;4)]-N-acetyl-alpha-D-muramoyl-L-alanyl-D-glutamyl-meso-2,6-diaminopimeloyl-D-alanyl-D-alanine + UDP + H(+). The protein operates within cell wall biogenesis; peptidoglycan biosynthesis. Cell wall formation. Catalyzes the transfer of a GlcNAc subunit on undecaprenyl-pyrophosphoryl-MurNAc-pentapeptide (lipid intermediate I) to form undecaprenyl-pyrophosphoryl-MurNAc-(pentapeptide)GlcNAc (lipid intermediate II). In Neisseria meningitidis serogroup C / serotype 2a (strain ATCC 700532 / DSM 15464 / FAM18), this protein is UDP-N-acetylglucosamine--N-acetylmuramyl-(pentapeptide) pyrophosphoryl-undecaprenol N-acetylglucosamine transferase.